Reading from the N-terminus, the 112-residue chain is UPF0212 protein Mboo_1659 (112 aa).

This sequence belongs to the UPF0212 family.

The sequence is that of UPF0212 protein Mboo_1659 from Methanoregula boonei (strain DSM 21154 / JCM 14090 / 6A8).